Here is a 335-residue protein sequence, read N- to C-terminus: Cut9-interacting protein scn1 (335 aa).

It belongs to the metallo-dependent hydrolases superfamily.

Its function is as follows. Interacts with cut9. The polypeptide is Cut9-interacting protein scn1 (scn1) (Schizosaccharomyces pombe (strain 972 / ATCC 24843) (Fission yeast)).